The chain runs to 140 residues: Odorant-binding protein 10 (140 aa).

The first 25 residues, 1 to 25, serve as a signal peptide directing secretion; that stretch reads MTSFRLANLTVFLVLLFCFMRGVHS.

It belongs to the PBP/GOBP family. As to expression, high-level expression in female mouth parts, particularly in the proboscis (at protein level). Low-level expression in female antenna (at protein level). Female salivary gland. Female chemosensory organs: antenna, palp and proboscis. Male antenna, wing and maxillary palp. Expressed at higher levels in male tissues compared to female tissues. Not detected in midgut.

The protein resides in the secreted. Involved in modulation of blood-feeding behavior and capacity in female mosquitoes. Required for normal oviposition. Required for normal fecundity and fertility of female mosquitoes. Required for normal expression of VGA1 gene, which encodes the egg yolk protein vitellogenin-A1. Required for normal female longevity when mosquitoes are maintained on regular sugar meal. Functionally, (Microbial infection) Facilitates shedding of dengue virus type 2 particles into mosquito saliva. Does not affect dengue virus type 2 replication or infection prevalence in midgut and salivary glands at 14 days after blood feeding. In terms of biological role, (Microbial infection) Facilitates shedding of Zika virus particles into mosquito saliva. Does not affect Zika virus replication or infection prevalence in midgut and salivary glands at 14 days after blood feeding. This is Odorant-binding protein 10 from Aedes aegypti (Yellowfever mosquito).